The primary structure comprises 697 residues: MKFSLRWLQQIVDLNNIKFSTLVDKLSVSGFEVEDISRNSSNDDMIFDVTTTANRQDILCTVGLAREISSIFNRDLKYKLYKDSIAISTHCLNILNSVSLLDLSIVNVNYFYNNRSPLWLQYYLSSYNIKSLNLLTDIPQYIYLKWGQSIEIFDKNKISSVPIQYSLFNLQKKSHIIYDSPNIELEVLRYDDVILFPIGFSLNENIKCDAATNSIVIMGYVCDKQYITDIKKKLKLSTYLSQRCCNQGSRSDFLNAFYESVYLLGSFGFATLGKFYGYHKLYNISRILFIDKVKIQNILGSVKIGSYNYLTVKEIFTLLERLNFLPIYDSLKSSFKIHIPVYRQDDIVRPIDVIEEVARIYGFDNFISKLPLNPIDNKNIFLNNIFANKVYRIRYLLRCLGLHEAQNYSFYDYYPFNHDTQIKIYNPLAQDQSFLRSSLAVHLTLNQQDNLRQGNKDIEVFEIGKVFRLYSSSLEYDNTLNSFEFLHLSGLIANSIFLRPSWSDKEQSLSWFHAKGMVEEFLDRLEVPVVWKKISDLDQSNLFFNLMHLLNMNWTAIICNRFHEEIGIFGKLCNKSDFNSTYVFEFDLVKLIASIESLNHINSIINPYSSYPSLTRDISLTVKNSCTISFIKARILSYENNLIESIEVFNYYKDKSINAFYNVGLRIVYRAHNRTLNYSDINRIDQEIDDLLNEYKL.

In terms of domain architecture, B5 spans 283–368 (NISRILFIDK…RIYGFDNFIS (86 aa)). Residues aspartate 346, aspartate 352, glutamate 355, and glutamate 356 each contribute to the Mg(2+) site. An FDX-ACB domain is found at 609 to 697 (SSYPSLTRDI…IDDLLNEYKL (89 aa)).

Belongs to the phenylalanyl-tRNA synthetase beta subunit family. Type 1 subfamily. As to quaternary structure, tetramer of two alpha and two beta subunits. Requires Mg(2+) as cofactor.

The protein localises to the plastid. Its subcellular location is the chloroplast. The catalysed reaction is tRNA(Phe) + L-phenylalanine + ATP = L-phenylalanyl-tRNA(Phe) + AMP + diphosphate + H(+). The sequence is that of Phenylalanine--tRNA ligase beta subunit, chloroplastic from Gracilaria tenuistipitata var. liui (Red alga).